A 330-amino-acid chain; its full sequence is Taste receptor type 2 member 117 (330 aa).

The Extracellular portion of the chain corresponds to 1–16; the sequence is MKHFWKILSVISQSTL. A helical membrane pass occupies residues 17 to 37; sequence SVILIVELVIGIIGNGFMVLV. The Cytoplasmic portion of the chain corresponds to 38-53; sequence HCMDWVKKKKMSLVNQ. Residues 54–74 traverse the membrane as a helical segment; it reads ILTALSISRIFQLCLLFISLV. Over 75–95 the chain is Extracellular; sequence INFSYTDLTTSSRMIQVMYNA. N-linked (GlcNAc...) asparagine glycosylation is present at N76. Residues 96-116 form a helical membrane-spanning segment; it reads WILANHFSIWIATCLTVLYFL. Over 117 to 135 the chain is Cytoplasmic; that stretch reads KIANFSNSFFLYLKWRVEK. Residues 136-156 traverse the membrane as a helical segment; it reads VVSVTLLVSLLLLILNILLTN. The Extracellular portion of the chain corresponds to 157–190; it reads LETDMWTNEYQRNISCSFSSHYYAKCHRQVLRLH. N169 carries N-linked (GlcNAc...) asparagine glycosylation. The helical transmembrane segment at 191–211 threads the bilayer; sequence IIFLSVPVVLSLSTFLLLIFS. Over 212–239 the chain is Cytoplasmic; that stretch reads LWTHHKRMQQHVQGGRDARTTAHFKALQ. A helical transmembrane segment spans residues 240–260; it reads TVIAFFLLYSIFILSVLIQIW. Topologically, residues 261-269 are extracellular; that stretch reads KYELLKKNL. The helical transmembrane segment at 270-290 threads the bilayer; sequence FVVFCEVVYIAFPTFHSYILI. At 291 to 330 the chain is on the cytoplasmic side; that stretch reads VGDMKLRQACLPLCIIAAEIQTTLCRNFRSLKYFRLCCIF.

It belongs to the G-protein coupled receptor T2R family.

Its subcellular location is the membrane. Its function is as follows. Putative taste receptor which may play a role in the perception of bitterness. In Mus musculus (Mouse), this protein is Taste receptor type 2 member 117.